A 170-amino-acid chain; its full sequence is Cathelicidin antimicrobial peptide (170 aa).

The N-terminal stretch at 1–30 (MKTQRHGPSLGRWSLVLLLLGLVMPLAIVA) is a signal peptide. The propeptide at 31-131 (QVLSYQEAVL…DISCDKDNRR (101 aa)) is cathelin-like domain (CLD). Disulfide bonds link Cys86-Cys97 and Cys108-Cys125. The active core stretch occupies residues 150-162 (LKKIGQKIKDFLG).

This sequence belongs to the cathelicidin family. As to quaternary structure, monomer, homodimer or homotrimer (in vitro). Oligomerizes as tetra- or hexamer in solution (in vitro). Post-translationally, proteolytically cleaved by proteinase PRTN3 into antibacterial peptide LL-37. Proteolytically cleaved by cathepsin CTSG and neutrophil elastase ELANE. In terms of processing, resistant to proteolytic degradation in solution, and when bound to both zwitterionic (mimicking mammalian membranes) and negatively charged membranes (mimicking bacterial membranes). After secretion onto the skin surface, the CAMP gene product is processed by a serine protease-dependent mechanism into multiple novel antimicrobial peptides distinct from and shorter than cathelicidin LL-37. These peptides show enhanced antimicrobial action, acquiring the ability to kill skin pathogens such as S.aureus, E.coli and C.albicans. These peptides have lost the ability to stimulate CXCL8/IL8 release from keratinocytes. The peptides act synergistically, killing bacteria at lower concentrations when present together, and maintain activity at increased salt condition.

Its subcellular location is the secreted. It localises to the vesicle. Functionally, antimicrobial protein that is an integral component of the innate immune system. Binds to bacterial lipopolysaccharides (LPS). Acts via neutrophil N-formyl peptide receptors to enhance the release of CXCL2. Postsecretory processing generates multiple cathelicidin antimicrobial peptides with various lengths which act as a topical antimicrobial defense in sweat on skin. The unprocessed precursor form, cathelicidin antimicrobial peptide, inhibits the growth of Gram-negative E.coli and E.aerogenes with efficiencies comparable to that of the mature peptide LL-37 (in vitro). In terms of biological role, antimicrobial peptide that is an integral component of the innate immune system. Binds to bacterial lipopolysaccharides (LPS). Causes membrane permeabilization by forming transmembrane pores (in vitro). Causes lysis of E.coli. Exhibits antimicrobial activity against Gram-negative bacteria such as P.aeruginosa, S.typhimurium, E.aerogenes, E.coli and P.syringae, Gram-positive bacteria such as L.monocytogenes, S.epidermidis, S.pyogenes and S.aureus, as well as vancomycin-resistant enterococci (in vitro). Exhibits antimicrobial activity against methicillin-resistant S.aureus, P.mirabilis, and C.albicans in low-salt media, but not in media containing 100 mM NaCl (in vitro). Forms chiral supramolecular assemblies with quinolone signal (PQS) molecules of P.aeruginosa, which may lead to interference of bacterial quorum signaling and perturbance of bacterial biofilm formation. May form supramolecular fiber-like assemblies on bacterial membranes. Induces cytokine and chemokine producation as well as TNF/TNFA and CSF2/GMCSF production in normal human keratinocytes. Exhibits hemolytic activity against red blood cells. Exhibits antimicrobial activity against E.coli and B.megaterium (in vitro). In Trachypithecus obscurus (Dusky leaf-monkey), this protein is Cathelicidin antimicrobial peptide.